The sequence spans 253 residues: ATP synthase subunit a (253 aa).

6 helical membrane passes run 27 to 47, 87 to 107, 117 to 137, 146 to 166, 196 to 216, and 224 to 244; these read ISFTNASGFMLLGVVLVIGFF, FFPFVFTLFFFILFANLIGMV, IIVTGALAMTVILMVIVVGLI, LFAPSGAPLPIYIILTPIEII, FTVMLIGAGAIYIPVAALAFA, and LEFLVAGLQAYVFAILTCVYL.

The protein belongs to the ATPase A chain family. F-type ATPases have 2 components, CF(1) - the catalytic core - and CF(0) - the membrane proton channel. CF(1) has five subunits: alpha(3), beta(3), gamma(1), delta(1), epsilon(1). CF(0) has three main subunits: a(1), b(2) and c(9-12). The alpha and beta chains form an alternating ring which encloses part of the gamma chain. CF(1) is attached to CF(0) by a central stalk formed by the gamma and epsilon chains, while a peripheral stalk is formed by the delta and b chains.

The protein localises to the cell inner membrane. Functionally, key component of the proton channel; it plays a direct role in the translocation of protons across the membrane. This Hyphomonas neptunium (strain ATCC 15444) protein is ATP synthase subunit a.